Consider the following 443-residue polypeptide: Phosphomevalonate kinase ERG8 (443 aa).

An ATP-binding site is contributed by 160 to 170; the sequence is ANKTGLGSSAA.

The protein belongs to the GHMP kinase family. Mevalonate kinase subfamily.

It carries out the reaction (R)-5-phosphomevalonate + ATP = (R)-5-diphosphomevalonate + ADP. It functions in the pathway isoprenoid biosynthesis; isopentenyl diphosphate biosynthesis via mevalonate pathway; isopentenyl diphosphate from (R)-mevalonate: step 2/3. In terms of biological role, phosphomevalonate kinase; part of the second module of ergosterol biosynthesis pathway that includes the middle steps of the pathway. ERG8 converts 5-phosphomevalonate to 5-diphosphomevalonate. The second module is carried out in the vacuole and involves the formation of farnesyl diphosphate, which is also an important intermediate in the biosynthesis of ubiquinone, dolichol, heme and prenylated proteins. Activity by the mevalonate kinase ERG12 (FG05912) first converts mevalonate into 5-phosphomevalonate. 5-phosphomevalonate is then further converted to 5-diphosphomevalonate by the phosphomevalonate kinase ERG8 (FG09764). The diphosphomevalonate decarboxylase ERG19 (FG10424) then produces isopentenyl diphosphate. The isopentenyl-diphosphate delta-isomerase IDI1 (FG09722) then catalyzes the 1,3-allylic rearrangement of the homoallylic substrate isopentenyl (IPP) to its highly electrophilic allylic isomer, dimethylallyl diphosphate (DMAPP). Finally the farnesyl diphosphate synthase ERG20 (FG06784) catalyzes the sequential condensation of isopentenyl pyrophosphate with dimethylallyl pyrophosphate, and then with the resultant geranylpyrophosphate to the ultimate product farnesyl pyrophosphate. The sequence is that of Phosphomevalonate kinase ERG8 from Gibberella zeae (strain ATCC MYA-4620 / CBS 123657 / FGSC 9075 / NRRL 31084 / PH-1) (Wheat head blight fungus).